The chain runs to 417 residues: Citrate synthase-related protein DDB_G0287281 (417 aa).

A disordered region spans residues asparagine 284 to asparagine 317. Positions asparagine 286–asparagine 309 are enriched in low complexity.

Belongs to the citrate synthase family.

The sequence is that of Citrate synthase-related protein DDB_G0287281 from Dictyostelium discoideum (Social amoeba).